Reading from the N-terminus, the 368-residue chain is tRNA N6-adenosine threonylcarbamoyltransferase (368 aa).

His108 and His112 together coordinate Fe cation. Residues 149-153, Asp183, Gly196, Asp200, and Asn301 contribute to the substrate site; that span reads LVSGG. Residue Asp329 participates in Fe cation binding.

The protein belongs to the KAE1 / TsaD family. It depends on Fe(2+) as a cofactor.

Its subcellular location is the cytoplasm. The enzyme catalyses L-threonylcarbamoyladenylate + adenosine(37) in tRNA = N(6)-L-threonylcarbamoyladenosine(37) in tRNA + AMP + H(+). Functionally, required for the formation of a threonylcarbamoyl group on adenosine at position 37 (t(6)A37) in tRNAs that read codons beginning with adenine. Is involved in the transfer of the threonylcarbamoyl moiety of threonylcarbamoyl-AMP (TC-AMP) to the N6 group of A37, together with TsaE and TsaB. TsaD likely plays a direct catalytic role in this reaction. The chain is tRNA N6-adenosine threonylcarbamoyltransferase from Paenarthrobacter aurescens (strain TC1).